The following is a 759-amino-acid chain: Glycerol-3-phosphate O-acyltransferase 1 (759 aa).

The Lumenal portion of the chain corresponds to 1–48; the sequence is MPAPKLTEKFASSKSTQKTTNYSSIEAKSVKTSADQAYIYQEPSATKK. Residues 49 to 69 form a helical membrane-spanning segment; it reads ILYSIATWLLYNIFHCFFREI. Residues 70–434 lie on the Cytoplasmic side of the membrane; the sequence is RGRGSFKVPQ…AKVNFAKNLG (365 aa). Residues 414-419 carry the HXXXXD motif motif; it reads HYNLPD. A helical membrane pass occupies residues 435-449; that stretch reads LVFFRSIGLCILFSL. Ala-450 is a topological domain (lumenal). A helical transmembrane segment spans residues 451 to 465; the sequence is MPGIIMFSPVFILAK. Residues 466–493 lie on the Cytoplasmic side of the membrane; the sequence is RISQEKARTALSKSTVKIKANDVIATWK. A helical transmembrane segment spans residues 494-514; the sequence is ILIGMGFAPLLYIFWSVLITY. The Lumenal portion of the chain corresponds to 515–523; it reads YLRHKPWNK. The helical transmembrane segment at 524–544 threads the bilayer; it reads IYVFSGSYISCVIVTYSALIV. Residues 545–759 are Cytoplasmic-facing; it reads GDIGMDGFKS…EEEEGKEGDA (215 aa). Disordered regions lie at residues 613-667, 684-705, and 729-759; these read EEDR…SLVN, RKSE…EFEV, and IGEN…EGDA. Over residues 647-659 the composition is skewed to basic and acidic residues; it reads RDNHDAYEHHNQD. Over residues 688-702 the composition is skewed to low complexity; it reads SSLASTSVAPSSSSE. The span at 736-759 shows a compositional bias: acidic residues; it reads EEEEEEEEEEEEEEEEEEGKEGDA.

This sequence belongs to the GPAT/DAPAT family.

Its subcellular location is the endoplasmic reticulum membrane. The catalysed reaction is sn-glycerol 3-phosphate + an acyl-CoA = a 1-acyl-sn-glycero-3-phosphate + CoA. It catalyses the reaction dihydroxyacetone phosphate + an acyl-CoA = a 1-acylglycerone 3-phosphate + CoA. The enzyme catalyses sn-glycerol 3-phosphate + hexadecanoyl-CoA = 1-hexadecanoyl-sn-glycero-3-phosphate + CoA. It carries out the reaction (9Z)-hexadecenoyl-CoA + sn-glycerol 3-phosphate = 1-(9Z-hexadecenoyl)-sn-glycero-3-phosphate + CoA. The catalysed reaction is sn-glycerol 3-phosphate + octadecanoyl-CoA = 1-octadecanoyl-sn-glycero-3-phosphate + CoA. It catalyses the reaction sn-glycerol 3-phosphate + (9Z)-octadecenoyl-CoA = 1-(9Z-octadecenoyl)-sn-glycero-3-phosphate + CoA. The protein operates within phospholipid metabolism; CDP-diacylglycerol biosynthesis; CDP-diacylglycerol from sn-glycerol 3-phosphate: step 1/3. Its function is as follows. Dual substrate-specific glycerol-3-phosphate/dihydroxyacetone phosphate sn-1 acyltransferase, catalyzing the first and committed reaction in the de novo synthesis of glycerophospholipids and triacylglycerols (TAGs). Prefers Gly-3-P over dihydroxyacetone phosphate and has a marked preference for 16-carbon fatty acyl chains. Transfers a fatty acid from fatty acyl-CoA to the sn-1 position of glycerol-3-phosphate to produce lysophosphatidic acid (LysoPA). These lipids not only are precursors of glycerolipids, but also are dynamic components of signal transduction systems that control cell physiology. SCT1 is the primary supplier of diacylglycerols (DAG), used mainly in TAG synthesis and phosphatidylcholine (PC) synthesis through the CDP-choline pathway. Regulates fatty acid desaturation, that is, the ratio of unsaturated versus saturated fatty acyl chains, by competing with the desaturase OLE1 for the common substrate C16:0-CoA. Sequesters C16:0-CoA into lipids, thereby shielding it from desaturation by OLE1. This is Glycerol-3-phosphate O-acyltransferase 1 from Saccharomyces cerevisiae (strain ATCC 204508 / S288c) (Baker's yeast).